An 851-amino-acid chain; its full sequence is Receptor like protein kinase S.2 (851 aa).

Positions 117 to 436 constitute a Protein kinase 1 domain; the sequence is FSDELILGSG…LPSFKSHPLY (320 aa). ATP is bound by residues 123–131 and K146; that span reads LGSGGFGRV. D248 (proton acceptor) is an active-site residue. The segment at 448–471 is disordered; sequence SATTTTTRTTMTTTTSTTSFNASS. The 288-residue stretch at 532-819 folds into the Protein kinase 2 domain; the sequence is FSDARRVAEV…SILDGSERFF (288 aa). Residues 538–546 and K560 each bind ATP; that span reads VAEVDFGTA.

It belongs to the protein kinase superfamily. Ser/Thr protein kinase family.

It catalyses the reaction L-seryl-[protein] + ATP = O-phospho-L-seryl-[protein] + ADP + H(+). The catalysed reaction is L-threonyl-[protein] + ATP = O-phospho-L-threonyl-[protein] + ADP + H(+). This chain is Receptor like protein kinase S.2 (LECRKS2), found in Arabidopsis thaliana (Mouse-ear cress).